We begin with the raw amino-acid sequence, 554 residues long: MRISASTVLLGAASAASAASFQNQAQQVLADNFHKAHDAIKPVADSFAHTTLESFEEAFNGMNSQAKALWDEIKLLVPESAFDKPTWFSKPKAAKRRKDWDHVVKGADVQKLWVKGADGEKHREVGGQLDNFNLRVKSVDPSKLGVDKVKQYSGYLDDEANDKHLFYWFFESRNDPKNDPVVLWLNGGPGCSSLTGLFLELGPSSIDKKLKVINNEYAWNNNASVIFLDQPVNVGYSYSGNAVSNTVAAGKDVYALLTLFFHQFPEYAKQDFHIAGESYAGHYIPVFASEILSHKDRNINLKSVLIGNGLTDPLTQYEHYRPMACGEGGYPAVLSESECRSMDNALPRCQSLIRNCYESGSVWSCVPAAIYCNNQFIGPYQRTGQNVYDIRGKCEDDNNLCYSALGWISDYLNQKDVMDALGVEVESYDSCNFDINRNFLFQGDWMQPFHRLVPGILKEIPVLIYAGDADFICNWLGNKAWSEALEWPGKKGFNKAELEDLSLPEADKEYGKVKSSGNFTFMQIYQAGHMVPMDQPENSLDFLNRWLGGEWFEQ.

The first 17 residues, 1-17, serve as a signal peptide directing secretion; that stretch reads MRISASTVLLGAASAAS. Positions 18-137 are excised as a propeptide; sequence AASFQNQAQQ…QLDNFNLRVK (120 aa). Cystine bridges form between C191–C431, C325–C339, C349–C372, C356–C365, and C394–C401. Residue N222 is glycosylated (N-linked (GlcNAc...) asparagine). S278 is an active-site residue. D470 is a catalytic residue. A glycan (N-linked (GlcNAc...) asparagine) is linked at N518. Residue H529 is part of the active site.

This sequence belongs to the peptidase S10 family.

It localises to the vacuole. The catalysed reaction is Release of a C-terminal amino acid with broad specificity.. In terms of biological role, vacuolar carboxypeptidase involved in degradation of small peptides. Digests preferentially peptides containing an aliphatic or hydrophobic residue in P1' position, as well as methionine, leucine or phenylalanine in P1 position of ester substrate. The protein is Carboxypeptidase Y homolog A (CPYA) of Sordaria macrospora (strain ATCC MYA-333 / DSM 997 / K(L3346) / K-hell).